The following is a 1044-amino-acid chain: MPPPPHIKPENVLKRAQELIAVGQAPAALNVLHEHVTSKRTRSTPIVSLEPVMLLFVELCVDLRKGKAAKDGLYQYKNIAQNTNVGTIEVVLKKFIELAEKKVTEAQAKADEIQSSLESAAPSSNVEDLEAIETPETILLATVSGEQSRDRTDRAVVTPWLKFLWETYRTVLEILKNNARLEVMYQTTALQAFQFCLKYTRKTEFRRLCELLRNHVQNAAKYSAQMHAINLSDPDTLQRHLDTRFQQLNVAVELELWQEAFRSIEDIHTLLSLSKRPAKNVMMANYYEKLARIFLVSENYLFHAAAWNRYYNLLRQSAAALAAGQGTKKENPSVTDADMTKAASFVLLSALSIPVISTSRSRGALVDVDEVRKNKNTRLTNLLGMAQAPSRAVLFRDALNKGLLKRARPEIRDLYNILEVDFHPLSICKKITPILKQIGADPEMEKYVLPLQQVILTRLFQQLSQVYESVELKFIYELAQFPEPFQVTPAMIEKFIMNGCKKGDLAIRVDHISGVLTFDTDIFSSAKALHPGSAAGSAESEAGSVQRLQNTPAEIARLQLTRLAKTLHVTCMYVDPSYSEVRIQAKQAAQARAAAGVAKEHEETLARRVIIDKKKEAATDALQRKQREEETRKRIRTQQLQEAEKQRLLDEQREREKKRIKDEQDRIRQQELKKQLEELKSGVKGIDISELDLEDLDANRLRAIKLAQLEKEKNELNDKIRTTAKRIDHLERAFRREELKHIAEDYEAQKQHDMEVYEATKAETLKEAKEKHAEAVALKHRLSRLVPVYSNFRKEVSEKRHEEFEKRRKAAERDFEAKKKQRIREVQERRRRERAEREAEEQRQKEEEERARREEEERVAREEERRRVLTEEKAKREEERKKLDEIALKQKQREEEAEARRAARKAGVTEPPPRAAEPERTAPRLNIAPRTGGSSWRERQAAKEAAGGAAPAAAPAPEAPKEEAQPPRRTGGGYVPPHLRSGAGASAAPAAPPATEKYVPRHMRDSSSSQPPSRTQTPPAPAAEKPEGSGAPQKWVPRWKQQQS.

The stretch at 92-121 (LKKFIELAEKKVTEAQAKADEIQSSLESAA) forms a coiled coil. Positions 339–523 (MTKAASFVLL…GVLTFDTDIF (185 aa)) constitute a PCI domain. Positions 611 to 907 (IDKKKEAATD…EARRAARKAG (297 aa)) form a coiled coil. Residues 797-901 (SEKRHEEFEK…QREEEAEARR (105 aa)) show a composition bias toward basic and acidic residues. The segment at 797-1044 (SEKRHEEFEK…WVPRWKQQQS (248 aa)) is disordered. Low complexity-rich tracts occupy residues 943 to 956 (KEAA…AAPA) and 1006 to 1017 (SSSSQPPSRTQT).

The protein belongs to the eIF-3 subunit A family. Component of the eukaryotic translation initiation factor 3 (eIF-3) complex.

Its subcellular location is the cytoplasm. RNA-binding component of the eukaryotic translation initiation factor 3 (eIF-3) complex, which is involved in protein synthesis of a specialized repertoire of mRNAs and, together with other initiation factors, stimulates binding of mRNA and methionyl-tRNAi to the 40S ribosome. The eIF-3 complex specifically targets and initiates translation of a subset of mRNAs involved in cell proliferation. The chain is Eukaryotic translation initiation factor 3 subunit A (tif32) from Aspergillus clavatus (strain ATCC 1007 / CBS 513.65 / DSM 816 / NCTC 3887 / NRRL 1 / QM 1276 / 107).